The primary structure comprises 293 residues: 1D-myo-inositol 2-acetamido-2-deoxy-alpha-D-glucopyranoside deacetylase (293 aa).

Residues His15, Asp18, and His148 each contribute to the Zn(2+) site.

The protein belongs to the MshB deacetylase family. Zn(2+) serves as cofactor.

It catalyses the reaction 1D-myo-inositol 2-acetamido-2-deoxy-alpha-D-glucopyranoside + H2O = 1D-myo-inositol 2-amino-2-deoxy-alpha-D-glucopyranoside + acetate. In terms of biological role, catalyzes the deacetylation of 1D-myo-inositol 2-acetamido-2-deoxy-alpha-D-glucopyranoside (GlcNAc-Ins) in the mycothiol biosynthesis pathway. The chain is 1D-myo-inositol 2-acetamido-2-deoxy-alpha-D-glucopyranoside deacetylase from Corynebacterium diphtheriae (strain ATCC 700971 / NCTC 13129 / Biotype gravis).